Here is a 76-residue protein sequence, read N- to C-terminus: KANTR integral membrane protein (76 aa).

Positions 1-25 are cleaved as a signal peptide; that stretch reads MSPFSLLILVICAFSLFFLINLTRG. Residues 26 to 34 are Extracellular-facing; sequence LSILLVFSK. Residues 35-55 form a helical membrane-spanning segment; it reads NQLLALLLLSIVSLFSISLIS. The Cytoplasmic segment spans residues 56 to 76; sequence ALIFFDLLPSTFFGFILLFFF.

The protein resides in the membrane. The protein is KANTR integral membrane protein of Homo sapiens (Human).